Reading from the N-terminus, the 334-residue chain is Phospholipase A1 1 (334 aa).

The N-terminal stretch at 1–23 (MMNLKYLLFFCLVQALHYCYAYG) is a signal peptide. The propeptide occupies 24–33 (DPSLSNELDR). A disulfide bridge connects residues cysteine 37 and cysteine 120. The active-site Nucleophile is serine 170. The active-site Charge relay system is the aspartate 198. Disulfide bonds link cysteine 209-cysteine 214 and cysteine 252-cysteine 261. The active-site Charge relay system is the histidine 263. 3 disulfides stabilise this stretch: cysteine 278-cysteine 302, cysteine 279-cysteine 327, and cysteine 295-cysteine 300.

The protein belongs to the AB hydrolase superfamily. Lipase family. In terms of processing, not glycosylated. Expressed by the venom gland.

Its subcellular location is the secreted. The catalysed reaction is a 1,2-diacyl-sn-glycero-3-phosphocholine + H2O = a 2-acyl-sn-glycero-3-phosphocholine + a fatty acid + H(+). Its function is as follows. Catalyzes the hydrolysis of phosphatidylcholine with phospholipase A1 activity (3.6 U/ml). May act as an allergen and induce hemolytic activity. In vivo, a mixture of this protein and Ves a 1.02 is able to paralyze crickets. This chain is Phospholipase A1 1, found in Vespa affinis (Lesser banded hornet).